Reading from the N-terminus, the 2471-residue chain is Neurogenic locus notch homolog protein 2 (2471 aa).

The N-terminal stretch at 1–25 (MPALRPALLWALLALWLCCAAPAHA) is a signal peptide. EGF-like domains are found at residues 26-63 (LQCR…EYCQ), 64-102 (HRDP…EDCQ), 105-143 (TSHP…KECQ), and 144-180 (WTDA…QKCE). Residues 26-1677 (LQCRDGYEPC…SESLTPERTQ (1652 aa)) are Extracellular-facing. Cystine bridges form between Cys28–Cys41, Cys35–Cys51, Cys53–Cys62, Cys68–Cys79, Cys73–Cys90, Cys92–Cys101, Cys109–Cys121, Cys115–Cys131, Cys133–Cys142, Cys148–Cys159, Cys153–Cys168, Cys170–Cys179, Cys186–Cys198, Cys192–Cys207, Cys209–Cys218, Cys225–Cys236, Cys230–Cys246, Cys248–Cys257, Cys264–Cys275, Cys269–Cys284, Cys286–Cys295, Cys302–Cys315, Cys309–Cys324, Cys326–Cys335, Cys342–Cys353, Cys347–Cys362, Cys364–Cys373, Cys379–Cys390, Cys384–Cys401, Cys403–Cys412, Cys419–Cys433, Cys427–Cys442, Cys444–Cys453, Cys460–Cys471, Cys465–Cys480, Cys482–Cys491, Cys498–Cys509, Cys503–Cys518, Cys520–Cys529, Cys536–Cys547, Cys541–Cys556, Cys558–Cys567, Cys574–Cys584, Cys579–Cys593, Cys595–Cys604, Cys611–Cys622, Cys616–Cys631, Cys633–Cys642, Cys649–Cys659, Cys654–Cys668, Cys670–Cys679, Cys686–Cys697, Cys691–Cys706, Cys708–Cys717, Cys724–Cys734, Cys729–Cys743, Cys745–Cys754, Cys761–Cys772, Cys766–Cys781, Cys783–Cys792, Cys799–Cys810, Cys804–Cys819, Cys821–Cys830, Cys837–Cys848, Cys842–Cys859, Cys861–Cys870, Cys877–Cys888, Cys882–Cys897, Cys899–Cys908, Cys915–Cys926, Cys920–Cys935, Cys937–Cys946, Cys953–Cys964, Cys958–Cys973, Cys975–Cys984, Cys991–Cys1002, Cys996–Cys1011, Cys1013–Cys1022, Cys1029–Cys1040, Cys1034–Cys1049, Cys1051–Cys1060, Cys1067–Cys1078, Cys1072–Cys1087, and Cys1089–Cys1098. An N-linked (GlcNAc...) asparagine glycan is attached at Asn46. Asn155 carries an N-linked (GlcNAc...) asparagine glycan. The 38-residue stretch at 182-219 (DVNECDIPGHCQHGGTCLNLPGSYQCQCPQGFTGQYCD) folds into the EGF-like 5; calcium-binding domain. The EGF-like 6 domain occupies 221-258 (LYVPCAPSPCVNGGTCRQTGDFTFECNCLPGFEGSTCE). One can recognise an EGF-like 7; calcium-binding domain in the interval 260–296 (NIDDCPNHRCQNGGVCVDGVNTYNCRCPPQWTGQFCT). Residues 298-336 (DVDECLLQPNACQNGGTCANRNGGYGCVCVNGWSGDDCS) form the EGF-like 8; calcium-binding domain. The EGF-like 9; calcium-binding domain occupies 338–374 (NIDDCAFASCTPGSTCIDRVASFSCMCPEGKAGLLCH). Residues 375–413 (LDDACISNPCHKGALCDTNPLNGQYICTCPQGYKGADCT) enclose the EGF-like 10 domain. Residues 415-454 (DVDECAMANSNPCEHAGKCVNTDGAFHCECLKGYAGPRCE) enclose the EGF-like 11; calcium-binding domain. Residues 456-492 (DINECHSDPCQNDATCLDKIGGFTCLCMPGFKGVHCE) form the EGF-like 12; calcium-binding domain. One can recognise an EGF-like 13; calcium-binding domain in the interval 494 to 530 (EINECQSNPCVNNGQCVDKVNRFQCLCPPGFTGPVCQ). Residues 532–568 (DIDDCSSTPCLNGAKCIDHPNGYECQCATGFTGVLCE) form the EGF-like 14; calcium-binding domain. The EGF-like 15; calcium-binding domain maps to 570 to 605 (NIDNCDPDPCHHGQCQDGIDSYTCICNPGYMGAICS). The EGF-like 16; calcium-binding domain maps to 607-643 (QIDECYSSPCLNDGRCIDLVNGYQCNCQPGTSGVNCE). An O-linked (Glc...) serine; alternate glycan is attached at Ser613. A glycan (O-linked (Xyl...) serine; alternate) is linked at Ser613. The EGF-like 17; calcium-binding domain occupies 645 to 680 (NFDDCASNPCIHGICMDGINRYSCVCSPGFTGQRCN). Residues 682 to 718 (DIDECASNPCRKGATCINGVNGFRCICPEGPHHPSCY) enclose the EGF-like 18; calcium-binding domain. An EGF-like 19 domain is found at 720–755 (QVNECLSNPCIHGNCTGGLSGYKCLCDAGWVGINCE). The N-linked (GlcNAc...) asparagine glycan is linked to Asn733. In terms of domain architecture, EGF-like 20; calcium-binding spans 757–793 (DKNECLSNPCQNGGTCDNLVNGYRCTCKKGFKGYNCQ). One can recognise an EGF-like 21; calcium-binding domain in the interval 795–831 (NIDECASNPCLNQGTCFDDISGYTCHCVLPYTGKNCQ). Residues 833–871 (VLAPCSPNPCENAAVCKESPNFESYTCLCAPGWQGQRCT) form the EGF-like 22 domain. Positions 873 to 909 (DIDECISKPCMNHGLCHNTQGSYMCECPPGFSGMDCE) constitute an EGF-like 23; calcium-binding domain. One can recognise an EGF-like 24; calcium-binding domain in the interval 911 to 947 (DIDDCLANPCQNGGSCMDGVNTFSCLCLPGFTGDKCQ). The region spanning 949-985 (DMNECLSEPCKNGGTCSDYVNSYTCKCQAGFDGVHCE) is the EGF-like 25; calcium-binding domain. Positions 987-1023 (NINECTESSCFNGGTCVDGINSFSCLCPVGFTGSFCL) constitute an EGF-like 26; calcium-binding domain. One can recognise an EGF-like 27; calcium-binding domain in the interval 1025–1061 (EINECSSHPCLNEGTCVDGLGTYRCSCPLGYTGKNCQ). 2 EGF-like domains span residues 1063–1099 (LVNL…AYCD) and 1101–1147 (PNVS…SYCE). N-linked (GlcNAc...) asparagine glycosylation occurs at Asn1102. Intrachain disulfides connect Cys1105–Cys1126, Cys1120–Cys1135, Cys1137–Cys1146, Cys1153–Cys1164, Cys1158–Cys1173, Cys1175–Cys1184, Cys1191–Cys1202, Cys1196–Cys1211, Cys1213–Cys1222, Cys1229–Cys1241, Cys1235–Cys1250, Cys1252–Cys1261, Cys1268–Cys1281, Cys1273–Cys1290, Cys1292–Cys1301, Cys1308–Cys1319, Cys1313–Cys1331, Cys1333–Cys1342, Cys1378–Cys1389, Cys1383–Cys1400, Cys1402–Cys1411, Cys1425–Cys1448, Cys1430–Cys1443, and Cys1439–Cys1455. The 37-residue stretch at 1149–1185 (QLDECASNPCQHGATCSDFIGGYRCECVPGYQGVNCE) folds into the EGF-like 30; calcium-binding domain. The EGF-like 31; calcium-binding domain occupies 1187 to 1223 (EVDECQNQPCQNGGTCIDLVNHFKCSCPPGTRGLLCE). Positions 1225–1262 (NIDDCARGPHCLNGGQCMDRIGGYSCRCLPGFAGERCE) constitute an EGF-like 32; calcium-binding domain. EGF-like domains are found at residues 1264–1302 (DINE…RHCE), 1304–1343 (FVDV…ARCQ), and 1374–1412 (CESG…SRCE). LNR repeat units lie at residues 1425–1465 (CLSQ…PWAN), 1466–1502 (CSSP…NSKT), and 1503–1544 (CKYD…NLAE). Positions 1425-1677 (CLSQYCADKA…SESLTPERTQ (253 aa)) are negative regulatory region (NRR). Asn1465 is a glycosylation site (N-linked (GlcNAc...) asparagine). Disulfide bonds link Cys1466-Cys1489, Cys1472-Cys1484, Cys1480-Cys1496, Cys1503-Cys1527, Cys1509-Cys1522, Cys1518-Cys1534, and Cys1632-Cys1639. Residues 1678 to 1698 (LLYLLAVAVVIILFIILLGVI) traverse the membrane as a helical segment. The Cytoplasmic segment spans residues 1699 to 2471 (MAKRKRKHGS…PPHNNMQVYA (773 aa)). Thr1716 carries the post-translational modification Phosphothreonine. The disordered stretch occupies residues 1754–1788 (TSEHWVDDEGPQPKKVKAEDEALLSEEDDPIDRRP). Over residues 1774-1783 (EALLSEEDDP) the composition is skewed to acidic residues. Position 1778 is a phosphoserine (Ser1778). Residue Thr1802 is modified to Phosphothreonine. Ser1804 carries the post-translational modification Phosphoserine. Thr1808 is subject to Phosphothreonine. ANK repeat units lie at residues 1827–1871 (DGCT…SLQA), 1876–1905 (TGEM…DANA), 1909–1939 (MGRC…DLDA), 1943–1972 (DGTT…DVNA), 1976–2005 (HGKS…NRDM), and 2009–2038 (KEET…NRDI). 2 positions are modified to phosphoserine: Ser1842 and Ser1845. Phosphoserine is present on residues Ser2070, Ser2078, and Ser2081. Disordered regions lie at residues 2091 to 2168 (FLSL…TSSP) and 2380 to 2471 (VGKY…QVYA). Thr2097 carries the post-translational modification Phosphothreonine. The segment covering 2098-2107 (PMGKKSRRPS) has biased composition (basic residues). Polar residues-rich tracts occupy residues 2108-2117 (AKSTMPTSLP), 2137-2150 (EKVQ…TLSP), 2159-2168 (TYVSDTTSSP), and 2388-2406 (SQHS…SHSG). Low complexity predominate over residues 2417–2445 (PSPESPDQWSSSSPHSASDWSDVTTSPTP).

This sequence belongs to the NOTCH family. Heterodimer of a C-terminal fragment N(TM) and an N-terminal fragment N(EC) which are probably linked by disulfide bonds. Interacts with MAML1, MAML2 and MAML3 which act as transcriptional coactivators for NOTCH2. Interacts with RELA/p65. Interacts with HIF1AN. Interacts (via ANK repeats) with TCIM, the interaction inhibits the nuclear translocation of NOTCH2 N2ICD. Interacts with CUL1, RBX1, SKP1 and FBXW7 that are SCF(FBXW7) E3 ubiquitin-protein ligase complex components. Interacts with MINAR1; this interaction increases MINAR1 stability and function. Interacts with NOTCH2NL (NOTCH2NLA, NOTCH2NLB and/or NOTCH2NLC); leading to enhance Notch signaling pathway in a non-cell-autonomous manner. Interacts with MDK; this interaction mediates a nuclear accumulation of NOTCH2 and therefore activation of NOTCH2 signaling leading to interaction between HES1 and STAT3. Interacts with MINAR2. Post-translationally, synthesized in the endoplasmic reticulum as an inactive form which is proteolytically cleaved by a furin-like convertase in the trans-Golgi network before it reaches the plasma membrane to yield an active, ligand-accessible form. Cleavage results in a C-terminal fragment N(TM) and a N-terminal fragment N(EC). Following ligand binding, it is cleaved by TNF-alpha converting enzyme (TACE) to yield a membrane-associated intermediate fragment called notch extracellular truncation (NEXT). This fragment is then cleaved by presenilin dependent gamma-secretase to release a notch-derived peptide containing the intracellular domain (NICD) from the membrane. Hydroxylated by HIF1AN. In terms of processing, can be either O-glucosylated or O-xylosylated at Ser-613 by POGLUT1. Post-translationally, phosphorylated by GSK3. GSK3-mediated phosphorylation is necessary for NOTCH2 recognition by FBXW7, ubiquitination and degradation via the ubiquitin proteasome pathway. Expressed in the brain, heart, kidney, lung, skeletal muscle and liver. Ubiquitously expressed in the embryo.

It localises to the cell membrane. It is found in the nucleus. The protein resides in the cytoplasm. Functionally, functions as a receptor for membrane-bound ligands Jagged-1 (JAG1), Jagged-2 (JAG2) and Delta-1 (DLL1) to regulate cell-fate determination. Upon ligand activation through the released notch intracellular domain (NICD) it forms a transcriptional activator complex with RBPJ/RBPSUH and activates genes of the enhancer of split locus. Affects the implementation of differentiation, proliferation and apoptotic programs. Involved in bone remodeling and homeostasis. In collaboration with RELA/p65 enhances NFATc1 promoter activity and positively regulates RANKL-induced osteoclast differentiation. Positively regulates self-renewal of liver cancer cells. The sequence is that of Neurogenic locus notch homolog protein 2 from Homo sapiens (Human).